The chain runs to 300 residues: Transcription initiation factor IIB (300 aa).

Residues 3 to 34 form a TFIIB-type zinc finger; that stretch reads KQRVCPVCGSTEFIYDPERGEIVCARCGYVIE. 4 residues coordinate Zn(2+): Cys-7, Cys-10, Cys-26, and Cys-29. 2 tandem repeats follow at residues 114 to 197 and 210 to 291.

The protein belongs to the TFIIB family.

Functionally, stabilizes TBP binding to an archaeal box-A promoter. Also responsible for recruiting RNA polymerase II to the pre-initiation complex (DNA-TBP-TFIIB). This Pyrococcus abyssi (strain GE5 / Orsay) protein is Transcription initiation factor IIB.